A 90-amino-acid polypeptide reads, in one-letter code: Probable Fe(2+)-trafficking protein (90 aa).

It belongs to the Fe(2+)-trafficking protein family. Monomer.

In terms of biological role, could be a mediator in iron transactions between iron acquisition and iron-requiring processes, such as synthesis and/or repair of Fe-S clusters in biosynthetic enzymes. In Sodalis glossinidius (strain morsitans), this protein is Probable Fe(2+)-trafficking protein.